Here is a 437-residue protein sequence, read N- to C-terminus: Epsilon-sarcoglycan (437 aa).

Residues M1–F317 are Extracellular-facing. N-linked (GlcNAc...) asparagine glycosylation is present at N200. The chain crosses the membrane as a helical span at residues L318–I338. Topologically, residues M339 to S437 are cytoplasmic. The tract at residues Q418–S437 is disordered.

Belongs to the sarcoglycan alpha/epsilon family. In terms of processing, N-glycosylated. Post-translationally, ubiquitinated, leading to its degradation by the proteasome.

The protein resides in the cell membrane. Its subcellular location is the sarcolemma. It localises to the cytoplasm. The protein localises to the cytoskeleton. It is found in the cell projection. The protein resides in the dendrite. Its subcellular location is the golgi apparatus. Its function is as follows. Component of the sarcoglycan complex, a subcomplex of the dystrophin-glycoprotein complex which forms a link between the F-actin cytoskeleton and the extracellular matrix. This is Epsilon-sarcoglycan (SGCE) from Bos taurus (Bovine).